The primary structure comprises 88 residues: Small integral membrane protein 13 (88 aa).

A helical transmembrane segment spans residues 10–30 (LVFVATLLIVLLLMVCGWYFV). The span at 48–60 (TGSQEGDNEQPSG) shows a compositional bias: polar residues. Residues 48–88 (TGSQEGDNEQPSGSEAEEDPSASPHKMRSARQRRPPVDDGH) are disordered. Serine 59, serine 61, and serine 70 each carry phosphoserine. The segment covering 72–81 (HKMRSARQRR) has biased composition (basic residues).

The protein belongs to the SMIM13 family.

Its subcellular location is the membrane. The chain is Small integral membrane protein 13 (Smim13) from Rattus norvegicus (Rat).